We begin with the raw amino-acid sequence, 415 residues long: tRNA(Met) cytidine acetate ligase (415 aa).

Residues 7–20 (VVEYNPFHNGHRYH), G101, N162, and 187–188 (RI) contribute to the ATP site.

The protein belongs to the TmcAL family.

It localises to the cytoplasm. It carries out the reaction cytidine(34) in elongator tRNA(Met) + acetate + ATP = N(4)-acetylcytidine(34) in elongator tRNA(Met) + AMP + diphosphate. Its function is as follows. Catalyzes the formation of N(4)-acetylcytidine (ac(4)C) at the wobble position of elongator tRNA(Met), using acetate and ATP as substrates. First activates an acetate ion to form acetyladenylate (Ac-AMP) and then transfers the acetyl group to tRNA to form ac(4)C34. The protein is tRNA(Met) cytidine acetate ligase of Bacillus velezensis (strain DSM 23117 / BGSC 10A6 / LMG 26770 / FZB42) (Bacillus amyloliquefaciens subsp. plantarum).